A 133-amino-acid chain; its full sequence is Holo-[acyl-carrier-protein] synthase (133 aa).

Residues Asp8 and Glu57 each contribute to the Mg(2+) site.

It belongs to the P-Pant transferase superfamily. AcpS family. The cofactor is Mg(2+).

The protein resides in the cytoplasm. It catalyses the reaction apo-[ACP] + CoA = holo-[ACP] + adenosine 3',5'-bisphosphate + H(+). Transfers the 4'-phosphopantetheine moiety from coenzyme A to a Ser of acyl-carrier-protein. In Bartonella henselae (strain ATCC 49882 / DSM 28221 / CCUG 30454 / Houston 1) (Rochalimaea henselae), this protein is Holo-[acyl-carrier-protein] synthase.